A 95-amino-acid polypeptide reads, in one-letter code: Large ribosomal subunit protein bL21 (95 aa).

Belongs to the bacterial ribosomal protein bL21 family. Part of the 50S ribosomal subunit. Contacts protein L20.

Its function is as follows. This protein binds to 23S rRNA in the presence of protein L20. This is Large ribosomal subunit protein bL21 from Chlorobaculum tepidum (strain ATCC 49652 / DSM 12025 / NBRC 103806 / TLS) (Chlorobium tepidum).